The chain runs to 442 residues: DDB1- and CUL4-associated factor 12-B (442 aa).

Positions 1–13 (MTRRPVSRKRRAT) are enriched in basic residues. The disordered stretch occupies residues 1–31 (MTRRPVSRKRRATHGTGPGEQSDWDHSAHKR). 4 WD repeats span residues 132–173 (SHQS…PVCV), 177–215 (GHNDWIFSIAWISDTMAVSGSRDGFMALWEMTDEVVNKR), 245–284 (PVNCKVRALAFNGNNKELGAVSLDGFFHLWKAEQTLSKLL), and 333–370 (EQGSGIRSVSFYEHIVTVGTGQGALLFYDIRAQRFLED).

Belongs to the WD repeat DCAF12 family. In terms of assembly, component of the DCX(DCAF12) E3 ubiquitin ligase complex, at least composed of cul4 (cul4a or cul4b), ddb1, dcaf12 and rbx1.

It localises to the cytoplasm. The protein localises to the cytoskeleton. The protein resides in the microtubule organizing center. It is found in the centrosome. Its subcellular location is the nucleus. The protein operates within protein modification; protein ubiquitination. Functionally, substrate-recognition component of a DCX (DDB1-CUL4-X-box) E3 ubiquitin-protein ligase complex of the DesCEND (destruction via C-end degrons) pathway, which recognizes a C-degron located at the extreme C terminus of target proteins, leading to their ubiquitination and degradation. The C-degron recognized by the DesCEND pathway is usually a motif of less than ten residues and can be present in full-length proteins, truncated proteins or proteolytically cleaved forms. The DCX(DCAF12) complex specifically recognizes proteins with a diglutamate (Glu-Glu) at the C-terminus leading to their ubiquitination and degradation. Also directly recognizes the C-terminal glutamate-leucine (Glu-Leu) degron as an alternative degron in proteins leading to their ubiquitination and degradation. This Xenopus laevis (African clawed frog) protein is DDB1- and CUL4-associated factor 12-B (dcaf12-b).